Reading from the N-terminus, the 130-residue chain is Follitropin subunit beta (130 aa).

The first 20 residues, 1–20 (MMKLIQLCILFWCWRAICCH), serve as a signal peptide directing secretion. Intrachain disulfides connect cysteine 22/cysteine 70, cysteine 36/cysteine 85, cysteine 39/cysteine 123, cysteine 47/cysteine 101, cysteine 51/cysteine 103, and cysteine 106/cysteine 113. N-linked (GlcNAc...) asparagine glycans are attached at residues asparagine 26 and asparagine 43.

The protein belongs to the glycoprotein hormones subunit beta family. In terms of assembly, heterodimer. The active follitropin is a heterodimer composed of an alpha chain/CGA shared with other hormones and a unique beta chain/FSHB shown here.

The protein resides in the secreted. Together with the alpha chain CGA constitutes follitropin, the follicle-stimulating hormone, and provides its biological specificity to the hormone heterodimer. Binds FSHR, a G protein-coupled receptor, on target cells to activate downstream signaling pathways. Follitropin is involved in follicle development and spermatogenesis in reproductive organs. The polypeptide is Follitropin subunit beta (Fshb) (Mus musculus (Mouse)).